The primary structure comprises 183 residues: Large ribosomal subunit protein uL6 (183 aa).

It belongs to the universal ribosomal protein uL6 family. Part of the 50S ribosomal subunit.

Its function is as follows. This protein binds to the 23S rRNA, and is important in its secondary structure. It is located near the subunit interface in the base of the L7/L12 stalk, and near the tRNA binding site of the peptidyltransferase center. The sequence is that of Large ribosomal subunit protein uL6 from Chlamydia muridarum (strain MoPn / Nigg).